The primary structure comprises 1420 residues: DNA-directed RNA polymerase subunit beta' (1420 aa).

4 residues coordinate Zn(2+): Cys71, Cys73, Cys86, and Cys89. The Mg(2+) site is built by Asp461, Asp463, and Asp465. Positions 815, 889, 896, and 899 each coordinate Zn(2+).

It belongs to the RNA polymerase beta' chain family. In terms of assembly, the RNAP catalytic core consists of 2 alpha, 1 beta, 1 beta' and 1 omega subunit. When a sigma factor is associated with the core the holoenzyme is formed, which can initiate transcription. Requires Mg(2+) as cofactor. Zn(2+) serves as cofactor.

It carries out the reaction RNA(n) + a ribonucleoside 5'-triphosphate = RNA(n+1) + diphosphate. Its function is as follows. DNA-dependent RNA polymerase catalyzes the transcription of DNA into RNA using the four ribonucleoside triphosphates as substrates. This is DNA-directed RNA polymerase subunit beta' from Haemophilus ducreyi (strain 35000HP / ATCC 700724).